Reading from the N-terminus, the 1232-residue chain is Nitrate reductase alpha subunit (1232 aa).

The 4Fe-4S Mo/W bis-MGD-type domain maps to 53 to 117 (DKVVRSTHGV…SFSWYSYSPT (65 aa)). The [4Fe-4S] cluster site is built by His60, Cys64, Cys68, and Cys103. Asp233 serves as a coordination point for Mo-bis(molybdopterin guanine dinucleotide).

It belongs to the prokaryotic molybdopterin-containing oxidoreductase family. [4Fe-4S] cluster serves as cofactor. The cofactor is Mo-bis(molybdopterin guanine dinucleotide).

The protein resides in the cell membrane. It catalyses the reaction nitrate + a quinol = a quinone + nitrite + H2O. In terms of biological role, the alpha chain is the actual site of nitrate reduction. In Mycobacterium tuberculosis (strain CDC 1551 / Oshkosh), this protein is Nitrate reductase alpha subunit (narG).